Here is a 192-residue protein sequence, read N- to C-terminus: MSGVLSCVLRACACAGLCCWVCMGAICGGCQRWWRRRCARWGRVGPRVRSGDGARWVSRKCETERAPSAARSPACSPHFVLVSSSSSSSCSSACSSRPLSSPPSPRAASHAVCAAGGCDLPTHDADGDADEGTDVTLSERAGADEGAGGNAAGCPEDTRGFARSPGDLMGGMNGDLGDEGETGEGGDNGAGE.

The signal sequence occupies residues 1–24 (MSGVLSCVLRACACAGLCCWVCMG). Positions 140–192 (RAGADEGAGGNAAGCPEDTRGFARSPGDLMGGMNGDLGDEGETGEGGDNGAGE) are disordered.

This is an uncharacterized protein from Human herpesvirus 6A (strain Uganda-1102) (HHV-6 variant A).